Here is a 428-residue protein sequence, read N- to C-terminus: uncharacterized protein (428 aa).

10 consecutive transmembrane segments (helical) span residues 26–46 (VALT…DDVF), 51–71 (AGID…VSVL), 90–110 (AAPL…SALL), 135–155 (TPFL…TLVG), 177–197 (MAPA…WLLG), 223–243 (LLIK…AHPV), 278–298 (TLLF…TGVV), 314–334 (LLTV…IDNI), 359–379 (TFWW…AVAA), and 407–427 (VVTA…YFVF).

This sequence belongs to the CitM (TC 2.A.11) transporter family.

The protein localises to the cell membrane. This is an uncharacterized protein from Mycobacterium tuberculosis (strain CDC 1551 / Oshkosh).